A 221-amino-acid polypeptide reads, in one-letter code: MTDICDANKFKHRFRGYFPVVIDVETAGFNANTDALLEIAVSLLKMNSDGVIVLDRTLHFNIEPFEGANLEPAALAFNGIDPTNPLRGAVDEKVAFLEIFKEVKKAQKAADCHRSIIVAHNAAFDLGFVNKAIERNGLKRSPFHPFASFDTATLAGLAIGHTVLAKACKMAGIDFDNKEAHSALYDTERTAELFCLIVNRWKALGGWPLAAVEDDSDSTSE.

One can recognise an Exonuclease domain in the interval 20–194 (VVIDVETAGF…YDTERTAELF (175 aa)). The Mg(2+) site is built by aspartate 23, glutamate 25, histidine 181, and aspartate 186. Histidine 181 serves as the catalytic Proton donor/acceptor.

This sequence belongs to the RNase T family. In terms of assembly, homodimer. Mg(2+) is required as a cofactor.

Its function is as follows. Trims short 3' overhangs of a variety of RNA species, leaving a one or two nucleotide 3' overhang. Responsible for the end-turnover of tRNA: specifically removes the terminal AMP residue from uncharged tRNA (tRNA-C-C-A). Also appears to be involved in tRNA biosynthesis. The chain is Ribonuclease T from Shewanella frigidimarina (strain NCIMB 400).